Consider the following 505-residue polypeptide: Maturase K (505 aa).

It belongs to the intron maturase 2 family. MatK subfamily.

The protein resides in the plastid. It localises to the chloroplast. Functionally, usually encoded in the trnK tRNA gene intron. Probably assists in splicing its own and other chloroplast group II introns. This is Maturase K from Allamanda cathartica (Yellow allamanda).